A 560-amino-acid chain; its full sequence is Membrane protein insertase YidC (560 aa).

The helical transmembrane segment at 1–21 (MDIKRTILIAALAVVSYVMVL) threads the bilayer. The disordered stretch occupies residues 42-66 (VAPGLPDGVPAGNNGASADVPSANA). 5 consecutive transmembrane segments (helical) span residues 341–361 (LELT…FWLL), 367–387 (LLGN…GLFF), 437–457 (LGGC…YWVL), 468–488 (WMLW…PIIM), and 515–535 (PIIF…YWVV).

This sequence belongs to the OXA1/ALB3/YidC family. Type 1 subfamily. Interacts with the Sec translocase complex via SecD. Specifically interacts with transmembrane segments of nascent integral membrane proteins during membrane integration.

Its subcellular location is the cell inner membrane. Its function is as follows. Required for the insertion and/or proper folding and/or complex formation of integral membrane proteins into the membrane. Involved in integration of membrane proteins that insert both dependently and independently of the Sec translocase complex, as well as at least some lipoproteins. Aids folding of multispanning membrane proteins. This chain is Membrane protein insertase YidC, found in Pseudomonas putida (strain GB-1).